Reading from the N-terminus, the 368-residue chain is Phospho-N-acetylmuramoyl-pentapeptide-transferase (368 aa).

9 helical membrane passes run 30 to 50 (AAAV…IKYL), 72 to 92 (LPTM…FLWA), 99 to 119 (VWLI…DDYM), 139 to 159 (VLLG…SVLL), 170 to 190 (LTID…TAVS), 201 to 221 (GLAS…AYLA), 238 to 258 (GGEI…FLWF), 264 to 286 (EIIM…ALLI), and 345 to 365 (KIVI…LMTL).

The protein belongs to the glycosyltransferase 4 family. MraY subfamily. Requires Mg(2+) as cofactor.

The protein localises to the cell inner membrane. The catalysed reaction is UDP-N-acetyl-alpha-D-muramoyl-L-alanyl-gamma-D-glutamyl-meso-2,6-diaminopimeloyl-D-alanyl-D-alanine + di-trans,octa-cis-undecaprenyl phosphate = di-trans,octa-cis-undecaprenyl diphospho-N-acetyl-alpha-D-muramoyl-L-alanyl-D-glutamyl-meso-2,6-diaminopimeloyl-D-alanyl-D-alanine + UMP. The protein operates within cell wall biogenesis; peptidoglycan biosynthesis. In terms of biological role, catalyzes the initial step of the lipid cycle reactions in the biosynthesis of the cell wall peptidoglycan: transfers peptidoglycan precursor phospho-MurNAc-pentapeptide from UDP-MurNAc-pentapeptide onto the lipid carrier undecaprenyl phosphate, yielding undecaprenyl-pyrophosphoryl-MurNAc-pentapeptide, known as lipid I. The protein is Phospho-N-acetylmuramoyl-pentapeptide-transferase of Chlorobium limicola (strain DSM 245 / NBRC 103803 / 6330).